The following is a 397-amino-acid chain: P2X purinoceptor 3 (397 aa).

Over 1–20 the chain is Cytoplasmic; the sequence is MNCISDFFTYETTKSVVVKS. A helical membrane pass occupies residues 21 to 43; the sequence is WTIGIINRAVQLLIISYFVGWVF. At 44–322 the chain is on the extracellular side; the sequence is LHEKAYQVRD…AGKFNIIPTI (279 aa). ATP contacts are provided by K63 and K65. Cystine bridges form between C107–C153, C116–C137, and C122–C147. Residue E111 participates in Mg(2+) binding. N139 carries N-linked (GlcNAc...) asparagine glycosylation. D158 is a Mg(2+) binding site. D158 provides a ligand contact to Ca(2+). N170 is a glycosylation site (N-linked (GlcNAc...) asparagine). ATP is bound at residue T172. N-linked (GlcNAc...) asparagine glycosylation is present at N194. 2 disulfides stabilise this stretch: C203–C213 and C247–C256. Residues S275, N279, and R281 each coordinate ATP. An N-linked (GlcNAc...) asparagine glycan is attached at N290. Residue K299 participates in ATP binding. A helical transmembrane segment spans residues 323 to 341; that stretch reads ISSVAAFTSVGVGTVLCDI. Over 342-397 the chain is Cytoplasmic; that stretch reads ILLNFLKGADHYKARKFEEVTETTLKGTASTNPVFASDQATVEKQSTDSGAYSIGH.

Belongs to the P2X receptor family. In terms of assembly, homotrimer. Forms heterotrimer with P2RX2. Heterotrimeric P2RX2/3 has a ligand dose-response profile that is distinct from either homotrimeric P2RX2 or P2RX3. Selectively expressed in sensory ganglia.

It localises to the cell membrane. The enzyme catalyses Ca(2+)(in) = Ca(2+)(out). It carries out the reaction Na(+)(in) = Na(+)(out). With respect to regulation, has high sensitivity to ATP. Fast activation by external ATP. Exhibits rapid desensitization. Sensitives to the ATP agonist:alpha/beta-methylene-ATP. Subject to allosteric inhibition by AF-219. Mg(2+) and Ca(2+) slow deactivation of P2RX3. Its function is as follows. Extracellular ATP-activated non-selective cation channel. Plays particularly important role in sensory neurons where its activation is critical for gustatory, nociceptive responses, visceral reflexes and sensory hypersensitization. This Rattus norvegicus (Rat) protein is P2X purinoceptor 3 (P2rx3).